We begin with the raw amino-acid sequence, 309 residues long: NAD kinase 2 (309 aa).

Catalysis depends on aspartate 81, which acts as the Proton acceptor. NAD(+) contacts are provided by residues 81–82 (DG), 155–156 (NE), aspartate 185, 196–201 (TAYALS), and asparagine 255.

Belongs to the NAD kinase family. A divalent metal cation is required as a cofactor.

The protein resides in the cytoplasm. It catalyses the reaction NAD(+) + ATP = ADP + NADP(+) + H(+). Functionally, involved in the regulation of the intracellular balance of NAD and NADP, and is a key enzyme in the biosynthesis of NADP. Catalyzes specifically the phosphorylation on 2'-hydroxyl of the adenosine moiety of NAD to yield NADP. The polypeptide is NAD kinase 2 (Gloeobacter violaceus (strain ATCC 29082 / PCC 7421)).